A 486-amino-acid polypeptide reads, in one-letter code: Histidine--tRNA ligase, chloroplastic/mitochondrial (486 aa).

The protein belongs to the class-II aminoacyl-tRNA synthetase family.

Its subcellular location is the plastid. The protein localises to the chloroplast. The protein resides in the mitochondrion. It carries out the reaction tRNA(His) + L-histidine + ATP = L-histidyl-tRNA(His) + AMP + diphosphate + H(+). This Arabidopsis thaliana (Mouse-ear cress) protein is Histidine--tRNA ligase, chloroplastic/mitochondrial.